A 540-amino-acid chain; its full sequence is MSRELTVSLAAIASQALTFPQLNQIHAQLIVFNSLPRQSYWASRIISCCTRLRAPSYYTRLIFDSVTFPNVFVVNSMFKYFSKMDMANDVLRLYEQRSRCGIMPDAFSFPVVIKSAGRFGILFQALVEKLGFFKDPYVRNVIMDMYVKHESVESARKVFDQISQRKGSDWNVMISGYWKWGNKEEACKLFDMMPENDVVSWTVMITGFAKVKDLENARKYFDRMPEKSVVSWNAMLSGYAQNGFTEDALRLFNDMLRLGVRPNETTWVIVISACSFRADPSLTRSLVKLIDEKRVRLNCFVKTALLDMHAKCRDIQSARRIFNELGTQRNLVTWNAMISGYTRIGDMSSARQLFDTMPKRNVVSWNSLIAGYAHNGQAALAIEFFEDMIDYGDSKPDEVTMISVLSACGHMADLELGDCIVDYIRKNQIKLNDSGYRSLIFMYARGGNLWEAKRVFDEMKERDVVSYNTLFTAFAANGDGVETLNLLSKMKDEGIEPDRVTYTSVLTACNRAGLLKEGQRIFKSIRNPLADHYACMDLLR.

PPR repeat units follow at residues 70–104 (NVFV…GIMP), 105–134 (DAFS…GFFK), 135–165 (DPYV…ISQR), 166–196 (KGSD…MPEN), 197–227 (DVVS…MPEK), 228–262 (SVVS…GVRP), 263–297 (NETT…RVRL), 298–328 (NCFV…LGTQ), 330–364 (NLVT…NVVS), 365–395 (WNSL…GDSK), 397–431 (DEVT…QIKL), 432–462 (NDSG…MKER), 463–497 (DVVS…GIEP), and 498–528 (DRVT…IRNP).

This sequence belongs to the PPR family. PCMP-A subfamily.

The protein is Pentatricopeptide repeat-containing protein At1g14470 (PCMP-A4) of Arabidopsis thaliana (Mouse-ear cress).